The following is a 593-amino-acid chain: Zinc metalloproteinase-disintegrin-like kaouthiagin-like (593 aa).

An N-terminal signal peptide occupies residues 1–20 (MIQALLVIICLAVFPHQGSS). The propeptide occupies 21 to 196 (IILESGNVND…KTSQFTNTPE (176 aa)). Positions 205–400 (KYIEFYVIVD…DRPQCILNKP (196 aa)) constitute a Peptidase M12B domain. Residues E208 and D292 each coordinate Ca(2+). Disulfide bonds link C316–C395, C356–C379, and C358–C363. Residue N319 is glycosylated (N-linked (GlcNAc...) asparagine). The Zn(2+) site is built by H341, H345, and H351. C395, N398, I410, N413, F415, E417, E420, and D423 together coordinate Ca(2+). A Disintegrin domain is found at 408–477 (PPICGNYFVE…ECPTDSLQRN (70 aa)). Intrachain disulfides connect C411–C440, C422–C435, C424–C430, C434–C462, C449–C469, C456–C488, C481–C493, C500–C550, C515–C558, C528–C538, C545–C581, and C575–C586. Residues 455 to 457 (DCD) carry the D/ECD-tripeptide motif. D457, L458, E460, D472, and S473 together coordinate Ca(2+). N490 is a glycosylation site (N-linked (GlcNAc...) asparagine).

It belongs to the venom metalloproteinase (M12B) family. P-III subfamily. P-IIIa sub-subfamily. As to quaternary structure, monomer. Requires Zn(2+) as cofactor. In terms of tissue distribution, expressed by the venom gland.

Its subcellular location is the secreted. Functionally, snake venom zinc metalloproteinase that cleaves the membrane-bound precursor of TNF-alpha (TNF) into its mature soluble form showing the same digestion pattern than ADAM17. The protein is Zinc metalloproteinase-disintegrin-like kaouthiagin-like of Naja atra (Chinese cobra).